Consider the following 119-residue polypeptide: uncharacterized protein (119 aa).

The interval 64-119 (SAPLGLKEVQKKSNEGLNEVQGAADINKQKRPANSQDSSSVEGDIQNFLEKVTGKN) is disordered. Residues 95–104 (PANSQDSSSV) show a composition bias toward polar residues.

This is an uncharacterized protein from Nostoc sp. (strain PCC 7120 / SAG 25.82 / UTEX 2576).